Reading from the N-terminus, the 546-residue chain is Apolipoprotein N-acyltransferase 1 (546 aa).

Transmembrane regions (helical) follow at residues 14 to 34 (FLLF…PLLP), 41 to 61 (AYGA…FAVV), 62 to 82 (FWGG…LFVF), 85 to 105 (VALC…CLAL), 122 to 142 (LVWL…PYGV), 151 to 171 (LPLI…LVVF), and 194 to 214 (FLSA…LCGF). Positions 233–502 (AKVALVQPNG…PGVLVADVPI (270 aa)) constitute a CN hydrolase domain. Residue glutamate 280 is the Proton acceptor of the active site. Lysine 361 is an active-site residue. The Nucleophile role is filled by cysteine 413. A helical membrane pass occupies residues 514–534 (GDALGVFFCVASLFILIAGGV).

Belongs to the CN hydrolase family. Apolipoprotein N-acyltransferase subfamily.

It is found in the cell inner membrane. The enzyme catalyses N-terminal S-1,2-diacyl-sn-glyceryl-L-cysteinyl-[lipoprotein] + a glycerophospholipid = N-acyl-S-1,2-diacyl-sn-glyceryl-L-cysteinyl-[lipoprotein] + a 2-acyl-sn-glycero-3-phospholipid + H(+). Its pathway is protein modification; lipoprotein biosynthesis (N-acyl transfer). Its function is as follows. Catalyzes the phospholipid dependent N-acylation of the N-terminal cysteine of apolipoprotein, the last step in lipoprotein maturation. The sequence is that of Apolipoprotein N-acyltransferase 1 from Treponema pallidum (strain Nichols).